A 372-amino-acid polypeptide reads, in one-letter code: Adaptive-response sensory kinase SasA (372 aa).

Residues 147 to 360 enclose the Histidine kinase domain; sequence MVAHELRTPL…CFHFTVPVWQ (214 aa). At H150 the chain carries Phosphohistidine; by autocatalysis.

In terms of assembly, homooligomerizes. Interacts with KaiC. Participates in the KaiBC complex, whose core is composed of a KaiC homohexamer and 6 KaiB.

It carries out the reaction ATP + protein L-histidine = ADP + protein N-phospho-L-histidine.. Functionally, member of the two-component regulatory system SasA/RpaA involved in genome-wide circadian gene expression. One of several clock output pathways. Participates in the Kai clock protein complex, the main circadian regulator in cyanobacteria, via its interaction with KaiC. KaiC enhances the autophosphorylation activity of SasA, which then transfers its phosphate group to RpaA to activate it. In addition to its output function, recruits fold-shifted KaiB (KaiB(fs)) to KaiC to cooperatively form the KaiB(6):KaiC(6) complex (independent of SasA kinase activity). Required for robustness of the circadian rhythm of gene expression and is involved in clock output, also required for adaptation to light/dark cycles. The polypeptide is Adaptive-response sensory kinase SasA (Prochlorococcus marinus (strain MIT 9215)).